A 529-amino-acid chain; its full sequence is Listeriolysin O (529 aa).

Residues 1 to 24 (MKKIMLVFITLILVSLPIAQQTEA) form the signal peptide. 4 beta stranded membrane-spanning segments follow: residues 214-227 (ESQL…AFKA), 234-243 (VNFGAISEGK), 312-321 (STKVKAAFDA), and 329-341 (SGDV…IKNS). The short motif at 483-493 (ECTGLAWEWWR) is the Conserved undecapeptide element. Residues 515–516 (TL) carry the Cholesterol binding motif.

Belongs to the cholesterol-dependent cytolysin family. In terms of assembly, homooligomeric pore complex of 35 to 50 subunits; when inserted in the host membrane.

Its subcellular location is the secreted. The protein localises to the host membrane. It is found in the host cell membrane. Activity of listeriolysin O is regulated on multiple levels. It should be high in the phagosome, thereby allowing escape of the bacteria from the phagosomal compartment. Then, once inside the host cytosol, the activity must be controlled to prevent lysis of the host plasma membrane and loss of the intracellular environment. Functionally, a cholesterol-dependent toxin that causes cytolysis by forming pores in cholesterol containing host membranes. After binding to target membranes, the protein undergoes a major conformation change, leading to its insertion in the host membrane and formation of an oligomeric pore complex. Cholesterol is required for binding to host membranes, membrane insertion and pore formation; cholesterol binding is mediated by a Thr-Leu pair in the C-terminus. Acts as a major virulence factor required for the escape of bacteria from phagosomal vacuoles and entry into the host cytosol. Can be reversibly inactivated by oxidation. The protein is Listeriolysin O (hly) of Listeria monocytogenes serotype 4b (strain F2365).